The sequence spans 502 residues: Lysine--tRNA ligase (502 aa).

Residues Glu-398 and Glu-405 each contribute to the Mg(2+) site.

Belongs to the class-II aminoacyl-tRNA synthetase family. As to quaternary structure, homodimer. Mg(2+) is required as a cofactor.

The protein resides in the cytoplasm. The enzyme catalyses tRNA(Lys) + L-lysine + ATP = L-lysyl-tRNA(Lys) + AMP + diphosphate. This is Lysine--tRNA ligase from Thermosipho africanus (strain TCF52B).